Consider the following 328-residue polypeptide: Putative UDP-N-acetylglucosamine--dolichyl-phosphate N-acetylglucosaminephosphotransferase (328 aa).

The next 9 helical transmembrane spans lie at 1–21, 48–68, 78–98, 107–127, 129–149, 166–186, 192–212, 228–248, and 301–321; these read MLVS…VTLI, VPVL…FTFL, IENV…LGLL, ATRA…SVGH, IISI…IIIL, LNGL…YIGL, SFYA…FLIF, FIGS…ALFF, and YHIV…AVVF.

This sequence belongs to the glycosyltransferase 4 family.

It is found in the cell membrane. It carries out the reaction a di-trans,poly-cis-dolichyl phosphate + UDP-N-acetyl-alpha-D-glucosamine = an N-acetyl-alpha-D-glucosaminyl-diphospho-di-trans,poly-cis-dolichol + UMP. Inhibited by tunicamycin. The sequence is that of Putative UDP-N-acetylglucosamine--dolichyl-phosphate N-acetylglucosaminephosphotransferase (gnpTA) from Sulfolobus acidocaldarius (strain ATCC 33909 / DSM 639 / JCM 8929 / NBRC 15157 / NCIMB 11770).